The following is a 535-amino-acid chain: Heparanase (535 aa).

A signal peptide spans 1-27; the sequence is MLRLLLLWLWGPLGALAQGAPAGTAPT. Heparan sulfate group is bound by residues 54-56 and threonine 89; that span reads DAS. A propeptide spans 102–149 (linker peptide); it reads PTSEERSYWKSQVNHDICRSEPVSAAVLRKLQVEWPFQELLLLREQYQ. The cysteines at positions 119 and 171 are disulfide-linked. 150 to 154 is a binding site for heparan sulfate group; that stretch reads KEFKN. N-linked (GlcNAc...) asparagine glycans are attached at residues asparagine 192 and asparagine 209. Residue glutamate 217 is the Proton donor of the active site. Heparan sulfate group-binding positions include 262–272, histidine 288, and arginine 295; that span reads QPRGKTVKLLR. The required for heterodimerization with the heparanase 8 kDa subunit stretch occupies residues 280 to 409; the sequence is EVIDSLTWHH…LLFKKLVGPR (130 aa). Residue glutamate 335 is the Nucleophile of the active site. Residues 340–342 and 381–383 each bind heparan sulfate group; these read YGG and GNY. Residues cysteine 429 and cysteine 534 are joined by a disulfide bond. Asparagine 451 carries an N-linked (GlcNAc...) asparagine glycan. Residues 519 to 535 form a required for transferring proheparanase to the Golgi apparatus, secretion and subsequent enzyme activity and for enhancement of PKB/AKT1 phosphorylation region; the sequence is FSYGFFVIRNAKIAACI.

Belongs to the glycosyl hydrolase 79 family. Heterodimer; heterodimer formation between the 8 kDa and the 50 kDa subunits is required for enzyme activity. Interacts with TF; the interaction, inhibited by heparin, enhances the generation of activated factor X and activates coagulation. Interacts with HRG; the interaction is enhanced at acidic pH, partially inhibits binding of HPSE to cell surface receptors and modulates its enzymatic activity. Interacts with SDC1; the interaction enhances the shedding of SDC1. Interacts with HPSE2. Proteolytically processed. The cleavage of the 65 kDa form leads to the generation of a linker peptide, and the 8 kDa and 50 kDa products. The active form, the 8/50 kDa heterodimer, is resistant to degradation. Complete removal of the linker peptide appears to be a prerequisite to the complete activation of the enzyme. In terms of processing, N-glycosylated. Glycosylation of the 50 kDa subunit appears to be essential for its solubility. Expressed in skin, mainly in the stratum granulosum and the first layer of the stratum corneum in the upper part of the epidermis. Also detected in hair follicles and in sebaceous glands.

It is found in the lysosome membrane. The protein localises to the secreted. It localises to the nucleus. It catalyses the reaction endohydrolysis of (1-&gt;4)-beta-D-glycosidic bonds of heparan sulfate chains in heparan sulfate proteoglycan.. Its activity is regulated as follows. Inhibited by EDTA and activated by calcium and magnesium. Inhibited by laminarin sulfate and, to a lower extent, by heparin and sulfamin. Its function is as follows. Endoglycosidase that cleaves heparan sulfate proteoglycans (HSPGs) into heparan sulfate side chains and core proteoglycans. Participates in extracellular matrix (ECM) degradation and remodeling. Selectively cleaves the linkage between a glucuronic acid unit and an N-sulfo glucosamine unit carrying either a 3-O-sulfo or a 6-O-sulfo group. Can also cleave the linkage between a glucuronic acid unit and an N-sulfo glucosamine unit carrying a 2-O-sulfo group, but not linkages between a glucuronic acid unit and a 2-O-sulfated iduronic acid moiety. It is essentially inactive at neutral pH but becomes active under acidic conditions such as during tumor invasion and in inflammatory processes. Facilitates cell migration associated with metastasis, wound healing and inflammation. Enhances shedding of syndecans, and increases endothelial invasion and angiogenesis in myelomas. Acts as a procoagulant by increasing the generation of activation factor X in the presence of tissue factor and activation factor VII. Increases cell adhesion to the extracellular matrix (ECM), independent of its enzymatic activity. Induces AKT1/PKB phosphorylation via lipid rafts increasing cell mobility and invasion. Heparin increases this AKT1/PKB activation. Regulates osteogenesis. Enhances angiogenesis through up-regulation of SRC-mediated activation of VEGF. Implicated in hair follicle inner root sheath differentiation and hair homeostasis. The chain is Heparanase (Hpse) from Mus musculus (Mouse).